The chain runs to 2961 residues: MGNAPSHSSEDEAAAAGGEGWGPHQDWAAVSGTTPGPGVAAPALPPAAALLEPARLREAAAALLPTPPCESLVSRHRGALFRWLEERLGRGEESVTLEQFRELLEARGAGCSSEQFEEAFAQFDAEGDGTVDAENMLEALKNSSGANLQGELSHIIRQLQACSLVPGFTDIFSESKEGLDIHSSMILRFLHRNRLSSAVMPYPMLEHCNNMCTMRSSVLKESLDQLVQKEKESPGDLTRSPEMDKLKSVAKCYAYIETSSNSADIDKMTNGETSSYWQSDGSACSHWIRLKMKPDVVLRHLSIAVAATDQSYMPQQVTVAVGRNASDLQEVRDVHIPSNVTGYVTLLENANVSQLYVQINIKRCLSDGCDTRIHGLRAVGFQRVKKSGVSVSDASAIWYWSLLTSLVTASMETNPAFVQTVLHNTQKALRHMPPLSLSPGSTDFSTFLSPNVLEEVDSFLIRITSCCSTPEVELTLLAFALARGSVAKVMSSLCTITDHLDTQYDASSLILSMASVRQNLLLKYGKPLQLTLQACDVKGKEDKSGPENLLVEPWTRDGFLTETGKTRASTIFSTGTESAFQVTQIRIMVRRGGIGAQCGLVFAYNSSSDKFCAEEHFKRFEKYDKWKLQELRQFVKSRIGCSSDDLGEDDPIGWFELEEEWDEADVKLQQCRVAKYLMVKFLCTRQESAERLGVQGLTISGYLRPARAEAEQSVTCAHCRKDTEESVCGATLLLRTLQFIQQLAHDLVQQKESGLKYKSFLDFAGLDLQIFWNFYSKLKQNPREECVSAQTLLLQLLQSCFSVLQGDVLAASEEEKAPIQSPKGVEAAKELYTHLCDVVDKVDGDSVPMEILKQEVRNTLLNGAAIFFPNRQTRRNHLFTMMNVTEQEHKQSLQLTFRSLCTYFSDKDPGGLLLLPEKNDLAKMNISEVLAVMDTLVSVAARECELLMLSGAPGEVGSVLFSLFWSVQGSLLSWCYLQLKSTDSGAKDLAVDLIEKYVGQFLASMRAILESLFSQYSGKTIVERLCNSVFSMAARQLVIFLLDFCTLDIPHCVLLREFSVLTELLKKLCSGPEGGLRKLDVETWQQEQPVVLHTWTKESAHNYENNCHEVSVFVSPGATYFEVEFDDRCETEKRYDYLEFTDARGRKTRYDTKVGTDKWPKKVTFKAGPRLQFLFHSDSSHNEWGYKFTVTACGLPDVAVSWGLDLQLLVSRLMGRLASQCMALKSVRQLGSNMVVPQAKMALVLSSPLWKPVFRHQVCPELELEASWPTHPHRNSKEVKNIPDDPCRHFLLDFAQSEPAQNFCGPYSELFKGFIQACRKQAPKTDIVAGSTIDQAVNATFAALVYRTPDLYEKLQKYVNSGGKIALSEEFAQVYSLADGIRIWMLEMKQKSLMSLGNEAEEKHSSEATEVNPESLAKECIEKSLLLLKFLPTGISSKESCEKLETADETSHLQPLNKRQRTSSVVEEHFQASVSPTEAAPPATGDQSPGLGTQPKLPSSSGLPAADVSPATAEEPLSPSTPTRRPPFTRGRLRLLSFRSMEEARLVPTVKEKYPVLKDVMDFIKDQSLSHRSVVKVLSLRKAQAQSILEVLKITQHCAESLGQPHCFHPPFILFLLELLTCQKDFTNYFGHLEGCGADLHKEIRDTYYQLVLFLVKAVKGFSSLNDRSLLPALSCVQTALLHLLDMGWEPNDLAFFVDIQLPDLLMKMSQENISVHDSVISQWSEEDELADAKQNSEWMDECQDGMFEAWYEKIAQEDPEKQRKMHMFIARYCDLLNVDISCDGCDEIAPWHRYRCLQCSDMDLCKTCFLGGVKPEGHGDDHEMVNMEFTCDHCQGLIIGRRMNCNVCDDFDLCYGCYAAKKYSYGHLPTHSITAHPMVTIRISDRQRLIQPYIHNYSWLLFAALALYSAHLASAEDVDGEKLDPQTRSSATTLRSQCMQLVGDCLMKAHQGKGLKALALLGVLPDGDSSLEDQALPVTVPTGASEEQLEKKAVQGAELSEAGNGKRAVHEEIRPVDFKQRNKADKGVSLSKDPSCQTQISDSPADASPPTGLPDAEDSEVSSQKPIEEKAVTPSPEQVFAECSQKRILGLLAAMLPPLKSGPTVPLIDLEHVLPLMFQVVISNAGHLNETYHLTLGLLGQLIIRLLPAEVDAAVIKVLSAKHNLFAAGDSSIVPDGWKTTHLLFSLGAVCLDSRVGLDWACSMAEILRSLNSAPLWRDVIATFTDHCIKQLPFQLKHTNIFTLLVLVGFPQVLCVGTRCVYMDNANEPHNVIILKHFTEKNRAVIVDVKTRKRKTVKDYQLVQKGGGQECGDSRAQLSQYSQHFAFIASHLLQSSMDSHCPEAVEATWVLSLALKGLYKTLKAHGFEEIRATFLQTDLLKLLVKKCSKGTGFSKTWLLRDLEILSIMLYSSKKEINALAEHGDLELDERGDREEEVERPVSSPGDPEQKKLDPLEGLDEPTRICFLMAHDALNAPLHILRAIYELQMKKTDYFFLEVQKRFDGDELTTDERIRSLAQRWQPSKSLRLEEQSAKAVDTDMIILPCLSRPARCDQATAESNPVTQKLISSTESELQQSYAKQRRSKSAALLHKELNCKSKRAVRDYLFRVNEATAVLYARHVLASLLAEWPSHVPVSEDILELSGPAHMTYILDMFMQLEEKHEWEKILQKVLQGCREDMLGTMALAACQFMEEPGMEVQVRESKHPYNNNTNFEDKVHIPGAIYLSIKFDSQCNTEEGCDELAMSSSSDFQQDRHSFSGSQQKWKDFELPGDTLYYRFTSDMSNTEWGYRFTVTAGHLGRFQTGFEILKQMLSEERVVPHLPLAKIWEWLVGVACRQTGHQRLKAIHLLLRIVRCCGHSDLCDLALLKPLWQLFTHMEYGLFEDVTQPGILLPLHRALTELFFVTENRAQELGVLQDYLLALTTDDHLLRCAAQALQNIAAISLAINYPNKATRLWNVEC.

The segment at 1–41 is disordered; sequence MGNAPSHSSEDEAAAAGGEGWGPHQDWAAVSGTTPGPGVAA. The N-myristoyl glycine moiety is linked to residue Gly2. Residues 111 to 146 enclose the EF-hand domain; sequence CSSEQFEEAFAQFDAEGDGTVDAENMLEALKNSSGA. The 180-residue stretch at 226-405 folds into the DOC domain; sequence LVQKEKESPG…AIWYWSLLTS (180 aa). Phosphoserine is present on residues Ser240, Ser1475, Ser1488, and Ser1509. The disordered stretch occupies residues 1446–1531; it reads TADETSHLQP…PTRRPPFTRG (86 aa). The span at 1485 to 1502 shows a compositional bias: polar residues; it reads GDQSPGLGTQPKLPSSSG. Thr1512 carries the phosphothreonine modification. Over residues 1516-1531 the composition is skewed to low complexity; the sequence is PLSPSTPTRRPPFTRG. A Phosphoserine modification is found at Ser1518. Phosphothreonine occurs at positions 1521 and 1523. Phosphoserine occurs at positions 1537 and 1540. ZZ-type zinc fingers lie at residues 1778 to 1833 and 1827 to 1882; these read NVDI…FTCD and NMEF…MVTI. Zn(2+)-binding residues include Cys1783, Cys1786, Cys1797, Cys1800, Cys1806, Cys1809, His1819, His1823, Cys1832, Cys1835, Cys1846, Cys1849, Cys1855, Cys1858, His1868, and His1872. Disordered regions lie at residues 1994 to 2078 and 2426 to 2455; these read AVQG…PSPE and LELD…KLDP. Residues 2009 to 2027 are compositionally biased toward basic and acidic residues; the sequence is AVHEEIRPVDFKQRNKADK. Polar residues predominate over residues 2033–2043; sequence KDPSCQTQISD. The segment covering 2426–2440 has biased composition (basic and acidic residues); it reads LELDERGDREEEVER. Position 2444 is a phosphoserine (Ser2444). Residue Lys2667 is modified to N6-acetyllysine.

As to quaternary structure, interacts with KLF6 and KLF9. Interacts via (ZZ-type 2 zinc finger) with histone H3 trimethylated at 'Lys-4' (H3K4me3) and histone H3 acetylated at 'Lys-4' (H3K4ac). As to expression, expressed at low levels in cerebellum.

Functionally, histone H3 reader which may act as a transcriptional coactivator for KLF6 and KLF9 transcription factors. The sequence is that of Zinc finger ZZ-type and EF-hand domain-containing protein 1 from Homo sapiens (Human).